Here is a 321-residue protein sequence, read N- to C-terminus: Methionyl-tRNA formyltransferase (321 aa).

(6S)-5,6,7,8-tetrahydrofolate is bound at residue 112–115; that stretch reads GLLP.

This sequence belongs to the Fmt family.

It carries out the reaction L-methionyl-tRNA(fMet) + (6R)-10-formyltetrahydrofolate = N-formyl-L-methionyl-tRNA(fMet) + (6S)-5,6,7,8-tetrahydrofolate + H(+). Attaches a formyl group to the free amino group of methionyl-tRNA(fMet). The formyl group appears to play a dual role in the initiator identity of N-formylmethionyl-tRNA by promoting its recognition by IF2 and preventing the misappropriation of this tRNA by the elongation apparatus. In Chlamydia caviae (strain ATCC VR-813 / DSM 19441 / 03DC25 / GPIC) (Chlamydophila caviae), this protein is Methionyl-tRNA formyltransferase.